Reading from the N-terminus, the 171-residue chain is Crossover junction endodeoxyribonuclease RuvC (171 aa).

Active-site residues include D7, E66, and D138. The Mg(2+) site is built by D7, E66, and D138.

Belongs to the RuvC family. In terms of assembly, homodimer which binds Holliday junction (HJ) DNA. The HJ becomes 2-fold symmetrical on binding to RuvC with unstacked arms; it has a different conformation from HJ DNA in complex with RuvA. In the full resolvosome a probable DNA-RuvA(4)-RuvB(12)-RuvC(2) complex forms which resolves the HJ. Mg(2+) serves as cofactor.

The protein resides in the cytoplasm. It catalyses the reaction Endonucleolytic cleavage at a junction such as a reciprocal single-stranded crossover between two homologous DNA duplexes (Holliday junction).. The RuvA-RuvB-RuvC complex processes Holliday junction (HJ) DNA during genetic recombination and DNA repair. Endonuclease that resolves HJ intermediates. Cleaves cruciform DNA by making single-stranded nicks across the HJ at symmetrical positions within the homologous arms, yielding a 5'-phosphate and a 3'-hydroxyl group; requires a central core of homology in the junction. The consensus cleavage sequence is 5'-(A/T)TT(C/G)-3'. Cleavage occurs on the 3'-side of the TT dinucleotide at the point of strand exchange. HJ branch migration catalyzed by RuvA-RuvB allows RuvC to scan DNA until it finds its consensus sequence, where it cleaves and resolves the cruciform DNA. The chain is Crossover junction endodeoxyribonuclease RuvC from Thiobacillus denitrificans (strain ATCC 25259 / T1).